Here is a 213-residue protein sequence, read N- to C-terminus: MKLEGRRIKGLYLVTEDYSRKNFFNIIEEAIIGGVDIVQYRDKSNPRSVRLDVARKVKQICNRYDILFFIDDDVQLAIEVQADGVHIGKDDMPLPDARRIFDGLIGYSTYGDREMAIFAEKNGADYVAFGPFFHTDTKKDADVYDIHVLEGIHKYIRIPVFVIGGINISNIRTFSGYGIDGVAVVSAIFSDPDPERAARELKAALYNYVLSSA.

4-amino-2-methyl-5-(diphosphooxymethyl)pyrimidine is bound by residues Q39–K43 and D71. Positions 72 and 91 each coordinate Mg(2+). S108 provides a ligand contact to 4-amino-2-methyl-5-(diphosphooxymethyl)pyrimidine. Residue T135–T137 coordinates 2-[(2R,5Z)-2-carboxy-4-methylthiazol-5(2H)-ylidene]ethyl phosphate. Position 138 (K138) interacts with 4-amino-2-methyl-5-(diphosphooxymethyl)pyrimidine. 2-[(2R,5Z)-2-carboxy-4-methylthiazol-5(2H)-ylidene]ethyl phosphate contacts are provided by residues G165 and V185–S186.

The protein belongs to the thiamine-phosphate synthase family. It depends on Mg(2+) as a cofactor.

The catalysed reaction is 2-[(2R,5Z)-2-carboxy-4-methylthiazol-5(2H)-ylidene]ethyl phosphate + 4-amino-2-methyl-5-(diphosphooxymethyl)pyrimidine + 2 H(+) = thiamine phosphate + CO2 + diphosphate. It carries out the reaction 2-(2-carboxy-4-methylthiazol-5-yl)ethyl phosphate + 4-amino-2-methyl-5-(diphosphooxymethyl)pyrimidine + 2 H(+) = thiamine phosphate + CO2 + diphosphate. It catalyses the reaction 4-methyl-5-(2-phosphooxyethyl)-thiazole + 4-amino-2-methyl-5-(diphosphooxymethyl)pyrimidine + H(+) = thiamine phosphate + diphosphate. It functions in the pathway cofactor biosynthesis; thiamine diphosphate biosynthesis; thiamine phosphate from 4-amino-2-methyl-5-diphosphomethylpyrimidine and 4-methyl-5-(2-phosphoethyl)-thiazole: step 1/1. Its function is as follows. Condenses 4-methyl-5-(beta-hydroxyethyl)thiazole monophosphate (THZ-P) and 2-methyl-4-amino-5-hydroxymethyl pyrimidine pyrophosphate (HMP-PP) to form thiamine monophosphate (TMP). In Thermoplasma acidophilum (strain ATCC 25905 / DSM 1728 / JCM 9062 / NBRC 15155 / AMRC-C165), this protein is Thiamine-phosphate synthase.